A 96-amino-acid chain; its full sequence is Large ribosomal subunit protein bL25 (96 aa).

The protein belongs to the bacterial ribosomal protein bL25 family. In terms of assembly, part of the 50S ribosomal subunit; part of the 5S rRNA/L5/L18/L25 subcomplex. Contacts the 5S rRNA. Binds to the 5S rRNA independently of L5 and L18.

Its function is as follows. This is one of the proteins that binds to the 5S RNA in the ribosome where it forms part of the central protuberance. The protein is Large ribosomal subunit protein bL25 of Francisella tularensis subsp. tularensis (strain FSC 198).